The chain runs to 471 residues: Tryptophan--tRNA ligase, cytoplasmic (471 aa).

The region spanning 8–64 (SLLELFNSIATQGELVRSLKAGNASKDEIDSAVKMLVSLKMSYKAAAGEDYKADCPP) is the WHEP-TRS domain. The disordered stretch occupies residues 59–79 (KADCPPGNPAPTSNHGPDATE). The residue at position 154 (lysine 154) is an N6-succinyllysine. Positions 164–173 (PSSEAMHVGH) match the 'HIGH' region motif. The 'KMSKS' region signature appears at 349–353 (KMSAS). Residue serine 351 is modified to Phosphoserine.

Belongs to the class-I aminoacyl-tRNA synthetase family. As to quaternary structure, homodimer. Interacts with an oxidized form of GAPDH. GAPDH stimulates the aminoacylation activity of isoform 2. Proteolytic cleavage generates 2 forms; T1-TrpRS and T2-TrpRS.

The protein resides in the cytoplasm. It carries out the reaction tRNA(Trp) + L-tryptophan + ATP = L-tryptophyl-tRNA(Trp) + AMP + diphosphate + H(+). Functionally, catalyzes the attachment of tryptophan to tRNA(Trp) in a two-step reaction: tryptophan is first activated by ATP to form Trp-AMP and then transferred to the acceptor end of the tRNA(Trp). Has no angiostatic activity. Its function is as follows. Possesses an angiostatic activity but has no aminoacylation activity. Inhibits fluid shear stress-activated responses of endothelial cells. Regulates ERK, Akt, and eNOS activation pathways that are associated with angiogenesis, cytoskeletal reorganization and shear stress-responsive gene expression. In terms of biological role, has an angiostatic activity. The sequence is that of Tryptophan--tRNA ligase, cytoplasmic from Homo sapiens (Human).